The following is a 513-amino-acid chain: Mannosyl-oligosaccharide alpha-1,2-mannosidase 1B (513 aa).

The N-terminal stretch at 1–21 (MHLPSLSLSLTALAIASPSAA) is a signal peptide. 8 N-linked (GlcNAc...) asparagine glycosylation sites follow: N97, N117, N150, N184, N251, N322, N348, and N368. Residues C334 and C363 are joined by a disulfide bond. E377 functions as the Proton donor in the catalytic mechanism. T503 provides a ligand contact to Ca(2+).

It belongs to the glycosyl hydrolase 47 family. As to quaternary structure, monomer. Requires Ca(2+) as cofactor. The cofactor is Mg(2+).

The protein localises to the cytoplasmic vesicle lumen. It catalyses the reaction N(4)-(alpha-D-Man-(1-&gt;2)-alpha-D-Man-(1-&gt;2)-alpha-D-Man-(1-&gt;3)-[alpha-D-Man-(1-&gt;2)-alpha-D-Man-(1-&gt;3)-[alpha-D-Man-(1-&gt;2)-alpha-D-Man-(1-&gt;6)]-alpha-D-Man-(1-&gt;6)]-beta-D-Man-(1-&gt;4)-beta-D-GlcNAc-(1-&gt;4)-beta-D-GlcNAc)-L-asparaginyl-[protein] (N-glucan mannose isomer 9A1,2,3B1,2,3) + 4 H2O = N(4)-(alpha-D-Man-(1-&gt;3)-[alpha-D-Man-(1-&gt;3)-[alpha-D-Man-(1-&gt;6)]-alpha-D-Man-(1-&gt;6)]-beta-D-Man-(1-&gt;4)-beta-D-GlcNAc-(1-&gt;4)-beta-D-GlcNAc)-L-asparaginyl-[protein] (N-glucan mannose isomer 5A1,2) + 4 beta-D-mannose. It carries out the reaction N(4)-(alpha-D-Man-(1-&gt;2)-alpha-D-Man-(1-&gt;2)-alpha-D-Man-(1-&gt;3)-[alpha-D-Man-(1-&gt;3)-[alpha-D-Man-(1-&gt;2)-alpha-D-Man-(1-&gt;6)]-alpha-D-Man-(1-&gt;6)]-beta-D-Man-(1-&gt;4)-beta-D-GlcNAc-(1-&gt;4)-beta-D-GlcNAc)-L-asparaginyl-[protein] (N-glucan mannose isomer 8A1,2,3B1,3) + 3 H2O = N(4)-(alpha-D-Man-(1-&gt;3)-[alpha-D-Man-(1-&gt;3)-[alpha-D-Man-(1-&gt;6)]-alpha-D-Man-(1-&gt;6)]-beta-D-Man-(1-&gt;4)-beta-D-GlcNAc-(1-&gt;4)-beta-D-GlcNAc)-L-asparaginyl-[protein] (N-glucan mannose isomer 5A1,2) + 3 beta-D-mannose. It participates in protein modification; protein glycosylation. Its function is as follows. Involved in the maturation of Asn-linked oligosaccharides. Progressively trims alpha-1,2-linked mannose residues from Man(9)GlcNAc(2) to produce Man(5)GlcNAc(2). In Aspergillus phoenicis (Aspergillus saitoi), this protein is Mannosyl-oligosaccharide alpha-1,2-mannosidase 1B (mns1B).